A 191-amino-acid polypeptide reads, in one-letter code: Glutathione-independent glyoxalase DJ-1 (191 aa).

Catalysis depends on residues Glu16, Cys111, and His130.

The protein belongs to the peptidase C56 family.

The protein resides in the cytoplasm. It localises to the nucleus. It catalyses the reaction methylglyoxal + H2O = (R)-lactate + H(+). Catalyzes the conversion of methylglyoxal (MG) to D-lactate in a single glutathione (GSH)-independent step. May play a role in detoxifying endogenously produced glyoxals. Involved in protection against reactive oxygen species (ROS). The protein is Glutathione-independent glyoxalase DJ-1 of Schizosaccharomyces pombe (strain 972 / ATCC 24843) (Fission yeast).